Consider the following 329-residue polypeptide: Sulfate/thiosulfate import ATP-binding protein CysA (329 aa).

Positions 3–237 constitute an ABC transporter domain; the sequence is IEIRNVSKNF…PASDFVYHFL (235 aa). 35-42 serves as a coordination point for ATP; sequence GPSGCGKT.

It belongs to the ABC transporter superfamily. Sulfate/tungstate importer (TC 3.A.1.6) family. The complex is composed of two ATP-binding proteins (CysA), two transmembrane proteins (CysT and CysW) and a solute-binding protein (CysP).

It localises to the cell inner membrane. The enzyme catalyses sulfate(out) + ATP + H2O = sulfate(in) + ADP + phosphate + H(+). The catalysed reaction is thiosulfate(out) + ATP + H2O = thiosulfate(in) + ADP + phosphate + H(+). Functionally, part of the ABC transporter complex CysAWTP involved in sulfate/thiosulfate import. Responsible for energy coupling to the transport system. The sequence is that of Sulfate/thiosulfate import ATP-binding protein CysA from Pseudomonas aeruginosa (strain ATCC 15692 / DSM 22644 / CIP 104116 / JCM 14847 / LMG 12228 / 1C / PRS 101 / PAO1).